We begin with the raw amino-acid sequence, 547 residues long: Glucose-6-phosphate isomerase (547 aa).

Glu-351 functions as the Proton donor in the catalytic mechanism. Active-site residues include His-382 and Lys-510.

This sequence belongs to the GPI family.

It localises to the cytoplasm. The catalysed reaction is alpha-D-glucose 6-phosphate = beta-D-fructose 6-phosphate. The protein operates within carbohydrate biosynthesis; gluconeogenesis. Its pathway is carbohydrate degradation; glycolysis; D-glyceraldehyde 3-phosphate and glycerone phosphate from D-glucose: step 2/4. Functionally, catalyzes the reversible isomerization of glucose-6-phosphate to fructose-6-phosphate. This is Glucose-6-phosphate isomerase from Beijerinckia indica subsp. indica (strain ATCC 9039 / DSM 1715 / NCIMB 8712).